The following is a 206-amino-acid chain: High frequency lysogenization protein HflD homolog (206 aa).

This sequence belongs to the HflD family.

The protein localises to the cytoplasm. It localises to the cell inner membrane. This is High frequency lysogenization protein HflD homolog from Pseudomonas syringae pv. tomato (strain ATCC BAA-871 / DC3000).